Consider the following 163-residue polypeptide: Arginine repressor (163 aa).

This sequence belongs to the ArgR family.

Its subcellular location is the cytoplasm. It participates in amino-acid biosynthesis; L-arginine biosynthesis [regulation]. Regulates arginine biosynthesis genes. The sequence is that of Arginine repressor from Anaeromyxobacter dehalogenans (strain 2CP-C).